A 63-amino-acid polypeptide reads, in one-letter code: 2-hydroxymuconate tautomerase (63 aa).

The active-site Proton acceptor; via imino nitrogen is the proline 2.

Belongs to the 4-oxalocrotonate tautomerase family. As to quaternary structure, homohexamer.

It catalyses the reaction (2Z,4E)-2-hydroxyhexa-2,4-dienedioate = (3E)-2-oxohex-3-enedioate. The protein operates within xenobiotic degradation; toluene degradation. It participates in xenobiotic degradation; xylene degradation. In terms of biological role, catalyzes the ketonization of 2-hydroxymuconate stereoselectively to yield 2-oxo-3-hexenedioate. The chain is 2-hydroxymuconate tautomerase (xylH) from Pseudomonas putida (Arthrobacter siderocapsulatus).